Here is a 277-residue protein sequence, read N- to C-terminus: Collectin-10 (277 aa).

The N-terminal stretch at 1 to 27 is a signal peptide; sequence MSRKKEQQLRKYGTLVVLFIFQVQIFG. Residues 41-82 are disordered; sequence THTILPGPKGDDGEKGDRGEVGKQGKVGPKGPKGNKGTVGDV. Over residues 49–63 the composition is skewed to basic and acidic residues; it reads KGDDGEKGDRGEVGK. A Collagen-like domain is found at 56–115; sequence GDRGEVGKQGKVGPKGPKGNKGTVGDVGDQGMLGKIGPIGGKGDKGAKGISGVSGKKGKA. The segment covering 64–79 has biased composition (low complexity); it reads QGKVGPKGPKGNKGTV. One can recognise a C-type lectin domain in the interval 155 to 271; sequence TDEKFYYIVK…CQVTIYFICE (117 aa). Intrachain disulfides connect cysteine 176–cysteine 270 and cysteine 248–cysteine 262. The N-linked (GlcNAc...) asparagine glycan is linked to asparagine 258.

This sequence belongs to the COLEC10/COLEC11 family. In terms of tissue distribution, widely expressed. Highly expressed in lung. Weakly expressed in larynx, syrinx and cranial air sac. Expressed throughout the lower gastrointestinal tract in increasing levels starting from a faint signal in duodenum and ending with relatively high signals in proctodeum, coprodeum and urodeum. In the upper part of the gastrointestinal tract, expressed in tongue, crop, and mucosa of the crop.

The protein localises to the secreted. It localises to the golgi apparatus. The protein resides in the cytoplasm. Functionally, lectin that binds to various sugars: galactose &gt; mannose = fucose &gt; N-acetylglucosamine &gt; N-acetylgalactosamine. Acts as a chemoattractant, probably involved in the regulation of cell migration. This is Collectin-10 (COLEC10) from Gallus gallus (Chicken).